The following is a 178-amino-acid chain: Large ribosomal subunit protein uL6 (178 aa).

It belongs to the universal ribosomal protein uL6 family. Part of the 50S ribosomal subunit.

Functionally, this protein binds to the 23S rRNA, and is important in its secondary structure. It is located near the subunit interface in the base of the L7/L12 stalk, and near the tRNA binding site of the peptidyltransferase center. This is Large ribosomal subunit protein uL6 from Coxiella burnetii (strain CbuG_Q212) (Coxiella burnetii (strain Q212)).